Here is a 185-residue protein sequence, read N- to C-terminus: MGQQVLKSSNEKMEKAVAAYSRELATVRAGRASASVLDKVQVDYYGAPTPVVQLANITVPEARLLVIQPYDKTSIGDIEKAILKADLGLNPSNDGTVIRIAFPALTEERRRDLVKVVKKYAEEAKVAVRNVRRDGNDDLKKLEKAGEITEDDLRGYTEDIQKETDKYIAKVDEIAKNKEKEIMEV.

Belongs to the RRF family.

It is found in the cytoplasm. Its function is as follows. Responsible for the release of ribosomes from messenger RNA at the termination of protein biosynthesis. May increase the efficiency of translation by recycling ribosomes from one round of translation to another. The protein is Ribosome-recycling factor of Bacillus anthracis (strain CDC 684 / NRRL 3495).